The following is a 146-amino-acid chain: D-aminoacyl-tRNA deacylase (146 aa).

A Gly-cisPro motif, important for rejection of L-amino acids motif is present at residues 138–139 (GP).

This sequence belongs to the DTD family. In terms of assembly, homodimer.

It is found in the cytoplasm. It catalyses the reaction glycyl-tRNA(Ala) + H2O = tRNA(Ala) + glycine + H(+). The enzyme catalyses a D-aminoacyl-tRNA + H2O = a tRNA + a D-alpha-amino acid + H(+). An aminoacyl-tRNA editing enzyme that deacylates mischarged D-aminoacyl-tRNAs. Also deacylates mischarged glycyl-tRNA(Ala), protecting cells against glycine mischarging by AlaRS. Acts via tRNA-based rather than protein-based catalysis; rejects L-amino acids rather than detecting D-amino acids in the active site. By recycling D-aminoacyl-tRNA to D-amino acids and free tRNA molecules, this enzyme counteracts the toxicity associated with the formation of D-aminoacyl-tRNA entities in vivo and helps enforce protein L-homochirality. The protein is D-aminoacyl-tRNA deacylase of Stenotrophomonas maltophilia (strain K279a).